Here is a 242-residue protein sequence, read N- to C-terminus: Uridylate kinase (242 aa).

ATP is bound at residue lysine 16–glycine 19. Glycine 58 provides a ligand contact to UMP. The ATP site is built by glycine 59 and arginine 63. UMP-binding positions include aspartate 78 and threonine 139–threonine 146. Positions 166, 167, 172, and 175 each coordinate ATP.

The protein belongs to the UMP kinase family. In terms of assembly, homohexamer.

Its subcellular location is the cytoplasm. The catalysed reaction is UMP + ATP = UDP + ADP. It functions in the pathway pyrimidine metabolism; CTP biosynthesis via de novo pathway; UDP from UMP (UMPK route): step 1/1. Its activity is regulated as follows. Inhibited by UTP. Catalyzes the reversible phosphorylation of UMP to UDP. This is Uridylate kinase from Rickettsia canadensis (strain McKiel).